Here is a 289-residue protein sequence, read N- to C-terminus: ATP synthase gamma chain (289 aa).

The protein belongs to the ATPase gamma chain family. F-type ATPases have 2 components, CF(1) - the catalytic core - and CF(0) - the membrane proton channel. CF(1) has five subunits: alpha(3), beta(3), gamma(1), delta(1), epsilon(1). CF(0) has three main subunits: a, b and c.

It localises to the cell membrane. Functionally, produces ATP from ADP in the presence of a proton gradient across the membrane. The gamma chain is believed to be important in regulating ATPase activity and the flow of protons through the CF(0) complex. The polypeptide is ATP synthase gamma chain (Lactococcus lactis subsp. lactis (strain IL1403) (Streptococcus lactis)).